The chain runs to 666 residues: Probable potassium transport system protein Kup (666 aa).

The next 12 membrane-spanning stretches (helical) occupy residues 16–36, 58–78, 99–119, 141–161, 167–187, 221–241, 253–273, 292–312, 343–363, 373–393, 402–422, and 424–444; these read GFIIALGIVYGDIGTSPLYTM, ISLIIWTLTLITTIKYVLVAL, TPWLIVPAVIGGATLLSDGAL, IFQNQSNVIFATLFILLLLFA, TGVIGKLFGPIMFIWFAFLGI, IFILGSIFLATTGAEALYSDL, WPFVKVAIILSYCGQGAWILA, FTMHVVILATLAAIIASQALI, TYIPVINWFLFAITTSIVLLF, YGLAITITMLMTTILLSFFLI, VLLMMIFFGILEGIFFLASAV, and FMHGGYVVVIIAVAIIFIMII.

This sequence belongs to the HAK/KUP transporter (TC 2.A.72) family.

It is found in the cell membrane. It catalyses the reaction K(+)(in) + H(+)(in) = K(+)(out) + H(+)(out). In terms of biological role, transport of potassium into the cell. Likely operates as a K(+):H(+) symporter. This Streptococcus agalactiae serotype III (strain NEM316) protein is Probable potassium transport system protein Kup.